Here is a 376-residue protein sequence, read N- to C-terminus: UDP-N-acetylglucosamine--N-acetylmuramyl-(pentapeptide) pyrophosphoryl-undecaprenol N-acetylglucosamine transferase (376 aa).

UDP-N-acetyl-alpha-D-glucosamine is bound by residues 12–14 (TAG), Asn-126, Arg-163, Ser-198, and Gln-296.

This sequence belongs to the glycosyltransferase 28 family. MurG subfamily.

The protein localises to the cell membrane. The enzyme catalyses di-trans,octa-cis-undecaprenyl diphospho-N-acetyl-alpha-D-muramoyl-L-alanyl-D-glutamyl-meso-2,6-diaminopimeloyl-D-alanyl-D-alanine + UDP-N-acetyl-alpha-D-glucosamine = di-trans,octa-cis-undecaprenyl diphospho-[N-acetyl-alpha-D-glucosaminyl-(1-&gt;4)]-N-acetyl-alpha-D-muramoyl-L-alanyl-D-glutamyl-meso-2,6-diaminopimeloyl-D-alanyl-D-alanine + UDP + H(+). It functions in the pathway cell wall biogenesis; peptidoglycan biosynthesis. In terms of biological role, cell wall formation. Catalyzes the transfer of a GlcNAc subunit on undecaprenyl-pyrophosphoryl-MurNAc-pentapeptide (lipid intermediate I) to form undecaprenyl-pyrophosphoryl-MurNAc-(pentapeptide)GlcNAc (lipid intermediate II). The chain is UDP-N-acetylglucosamine--N-acetylmuramyl-(pentapeptide) pyrophosphoryl-undecaprenol N-acetylglucosamine transferase from Frankia casuarinae (strain DSM 45818 / CECT 9043 / HFP020203 / CcI3).